We begin with the raw amino-acid sequence, 216 residues long: MSFIDSLSPQNVIPVEEIRYDERGLVPAIVQDYLDGTVLMMAWMNRESLQKTLDTGETWFWSRSRQEFWHKGGTSGHTQKVQSIRYDCDSDALLVGVEQIGDIACHTGERSCFHQVEGKIVAPPGDTLSQVFQVICDRRNHPTESSYTSKLFAGGDNKILKKIGEESAEVVMACKDDDQEAIAGEVADLLYHTLVALAHHQVDIKAVYRKLQERRR.

The tract at residues 1–127 is phosphoribosyl-AMP cyclohydrolase; that stretch reads MSFIDSLSPQ…GKIVAPPGDT (127 aa). Positions 128 to 216 are phosphoribosyl-ATP pyrophosphohydrolase; it reads LSQVFQVICD…VYRKLQERRR (89 aa).

The protein in the N-terminal section; belongs to the PRA-CH family. In the C-terminal section; belongs to the PRA-PH family.

The protein resides in the cytoplasm. It carries out the reaction 1-(5-phospho-beta-D-ribosyl)-ATP + H2O = 1-(5-phospho-beta-D-ribosyl)-5'-AMP + diphosphate + H(+). It catalyses the reaction 1-(5-phospho-beta-D-ribosyl)-5'-AMP + H2O = 1-(5-phospho-beta-D-ribosyl)-5-[(5-phospho-beta-D-ribosylamino)methylideneamino]imidazole-4-carboxamide. It functions in the pathway amino-acid biosynthesis; L-histidine biosynthesis; L-histidine from 5-phospho-alpha-D-ribose 1-diphosphate: step 2/9. The protein operates within amino-acid biosynthesis; L-histidine biosynthesis; L-histidine from 5-phospho-alpha-D-ribose 1-diphosphate: step 3/9. This Nostoc sp. (strain PCC 7120 / SAG 25.82 / UTEX 2576) protein is Histidine biosynthesis bifunctional protein HisIE (hisI).